The sequence spans 647 residues: Exoribonuclease 2 (647 aa).

The 328-residue stretch at 192–519 folds into the RNB domain; sequence RIDLTSLDFV…NHRLLKAIIQ (328 aa). The S1 motif domain occupies 564-646; the sequence is EQRFTAEIID…ETRNIVARPT (83 aa).

The protein belongs to the RNR ribonuclease family. RNase II subfamily.

The protein resides in the cytoplasm. It catalyses the reaction Exonucleolytic cleavage in the 3'- to 5'-direction to yield nucleoside 5'-phosphates.. In terms of biological role, involved in mRNA degradation. Hydrolyzes single-stranded polyribonucleotides processively in the 3' to 5' direction. In Photorhabdus laumondii subsp. laumondii (strain DSM 15139 / CIP 105565 / TT01) (Photorhabdus luminescens subsp. laumondii), this protein is Exoribonuclease 2.